The chain runs to 155 residues: Superoxide dismutase [Cu-Zn] (155 aa).

Cu cation contacts are provided by His-47, His-49, and His-64. A disulfide bond links Cys-58 and Cys-147. 4 residues coordinate Zn(2+): His-64, His-72, His-81, and Asp-84. Residue His-121 participates in Cu cation binding. Residue Arg-144 coordinates substrate.

This sequence belongs to the Cu-Zn superoxide dismutase family. In terms of assembly, homodimer. Requires Cu cation as cofactor. The cofactor is Zn(2+).

It is found in the cytoplasm. It carries out the reaction 2 superoxide + 2 H(+) = H2O2 + O2. In terms of biological role, destroys radicals which are normally produced within the cells and which are toxic to biological systems. This Kluyveromyces lactis (strain ATCC 8585 / CBS 2359 / DSM 70799 / NBRC 1267 / NRRL Y-1140 / WM37) (Yeast) protein is Superoxide dismutase [Cu-Zn] (SOD1).